Reading from the N-terminus, the 327-residue chain is NADPH-dependent aldose reductase GRE3 (327 aa).

The active-site Proton donor is the Y49. Position 111 (H111) interacts with substrate. 219-286 serves as a coordination point for NADP(+); sequence SSFGPQSFIE…SSKKERLLGN (68 aa).

The protein belongs to the aldo/keto reductase family. Monomer.

The protein resides in the cytoplasm. It localises to the nucleus. The enzyme catalyses an alditol + NAD(+) = an aldose + NADH + H(+). The catalysed reaction is an alditol + NADP(+) = an aldose + NADPH + H(+). In terms of biological role, aldose reductase with a broad substrate specificity. Reduces the cytotoxic compound methylglyoxal (MG) to acetol and (R)-lactaldehyde under stress conditions. MG is synthesized via a bypath of glycolysis from dihydroxyacetone phosphate and is believed to play a role in cell cycle regulation and stress adaptation. In pentose-fermenting yeasts, aldose reductase catalyzes the reduction of xylose into xylitol. The purified enzyme catalyzes this reaction, but the inability of S.cerevisiae to grow on xylose as sole carbon source indicates that the physiological function is more likely methylglyoxal reduction. The polypeptide is NADPH-dependent aldose reductase GRE3 (Saccharomyces cerevisiae (strain ATCC 204508 / S288c) (Baker's yeast)).